The sequence spans 353 residues: Iron(III) enterobactin esterase (353 aa).

This sequence belongs to the Fes family.

The protein localises to the cytoplasm. It catalyses the reaction Fe(III)-enterobactin + 3 H2O + H(+) = Fe(III)-[N-(2,3-dihydroxybenzoyl)-L-serine] + 2 N-(2,3-dihydroxybenzoyl)-L-serine. The enzyme catalyses Fe(III)-enterobactin + H2O = Fe(III)-[N-(2,3-dihydroxybenzoyl)-L-serine]3 + H(+). The catalysed reaction is Fe(III)-[N-(2,3-dihydroxybenzoyl)-L-serine]3 + H2O + H(+) = Fe(III)-[N-(2,3-dihydroxybenzoyl)-L-serine]2 + N-(2,3-dihydroxybenzoyl)-L-serine. It carries out the reaction Fe(III)-[N-(2,3-dihydroxybenzoyl)-L-serine]2 + H2O + H(+) = Fe(III)-[N-(2,3-dihydroxybenzoyl)-L-serine] + N-(2,3-dihydroxybenzoyl)-L-serine. Catalyzes the hydrolysis of ferric enterobactin (Fe-Ent). Is responsible for the release of iron from ferric enterobactin. The sequence is that of Iron(III) enterobactin esterase from Yersinia enterocolitica.